The chain runs to 806 residues: Leucine--tRNA ligase (806 aa).

Positions Pro-38–His-48 match the 'HIGH' region motif. The 'KMSKS' region motif lies at Lys-572–Ser-576. Lys-575 is a binding site for ATP.

Belongs to the class-I aminoacyl-tRNA synthetase family.

It is found in the cytoplasm. It catalyses the reaction tRNA(Leu) + L-leucine + ATP = L-leucyl-tRNA(Leu) + AMP + diphosphate. This chain is Leucine--tRNA ligase, found in Helicobacter pylori (strain J99 / ATCC 700824) (Campylobacter pylori J99).